A 751-amino-acid chain; its full sequence is Cyanobacterial phytochrome B (751 aa).

Cys-17 contributes to the a tetrapyrrole binding site. A chromophore binding domain region spans residues 22–511 (IHIPGLIQPH…RSAIIGIVLQ (490 aa)). A GAF domain is found at 152–320 (TTTEISQILA…MTSVEMSAKE (169 aa)). Residues 536 to 751 (IASHDLKEPL…STFYFTLQDV (216 aa)) enclose the Histidine kinase domain. The residue at position 539 (His-539) is a Phosphohistidine; by autocatalysis.

This sequence in the N-terminal section; belongs to the phytochrome family. Post-translationally, contains one covalently linked tetrapyrrole chromophore.

It catalyses the reaction ATP + protein L-histidine = ADP + protein N-phospho-L-histidine.. Its function is as follows. Photoreceptor which exists in two forms that are reversibly interconvertible by light: the R form that absorbs maximally in the red region of the spectrum and the FR form that absorbs maximally in the far-red region. This is Cyanobacterial phytochrome B (bphB) from Nostoc sp. (strain PCC 7120 / SAG 25.82 / UTEX 2576).